The following is a 28-amino-acid chain: Potassium channel toxin kappa-KTx 2.9 (28 aa).

2 disulfides stabilise this stretch: cysteine 4-cysteine 22 and cysteine 8-cysteine 18.

It belongs to the short scorpion toxin superfamily. Potassium channel inhibitor family. Gamma-KTx 2 subfamily. Post-translationally, contains 2 disulfide bonds. Expressed by the venom gland.

The protein resides in the secreted. Functionally, reversibly blocks voltage-gated potassium channels Kv1.2/KCNA2 and Kv1.3/KCNA3. This is Potassium channel toxin kappa-KTx 2.9 from Pandinus imperator (Emperor scorpion).